A 277-amino-acid chain; its full sequence is Putative pyruvate, phosphate dikinase regulatory protein (277 aa).

Residue 151-158 (GISRTSKT) participates in ADP binding.

Belongs to the pyruvate, phosphate/water dikinase regulatory protein family. PDRP subfamily.

The catalysed reaction is N(tele)-phospho-L-histidyl/L-threonyl-[pyruvate, phosphate dikinase] + ADP = N(tele)-phospho-L-histidyl/O-phospho-L-threonyl-[pyruvate, phosphate dikinase] + AMP + H(+). It carries out the reaction N(tele)-phospho-L-histidyl/O-phospho-L-threonyl-[pyruvate, phosphate dikinase] + phosphate + H(+) = N(tele)-phospho-L-histidyl/L-threonyl-[pyruvate, phosphate dikinase] + diphosphate. Bifunctional serine/threonine kinase and phosphorylase involved in the regulation of the pyruvate, phosphate dikinase (PPDK) by catalyzing its phosphorylation/dephosphorylation. This Alkaliphilus metalliredigens (strain QYMF) protein is Putative pyruvate, phosphate dikinase regulatory protein.